A 161-amino-acid polypeptide reads, in one-letter code: MSFFSDFFNSKKTEIFAPLSGDIINIEDVPDPVFSKKIVGDGIAIKPSSNRILAPVNGTIGKIFETMHAFSIISEDNVELFIHFGIDTVKLKGEGFKKKAKDNQKVKIGDEIIILDLEFIKEKAESILTPVVISNIENFKKIKKSSGTIAAGQTVIITLYH.

Positions 31–135 (DPVFSKKIVG…SILTPVVISN (105 aa)) constitute a PTS EIIA type-1 domain. Zn(2+) contacts are provided by His-68 and His-83. The active-site Tele-phosphohistidine intermediate; for EIIA activity is the His-83. Residue His-83 is modified to Phosphohistidine; by HPr.

It depends on Zn(2+) as a cofactor.

It localises to the cytoplasm. Its function is as follows. The phosphoenolpyruvate-dependent sugar phosphotransferase system (sugar PTS), a major carbohydrate active transport system, catalyzes the phosphorylation of incoming sugar substrates concomitantly with their translocation across the cell membrane. The enzyme II complex composed of PtsG and Crr is involved in glucose transport. This Buchnera aphidicola subsp. Acyrthosiphon pisum (strain APS) (Acyrthosiphon pisum symbiotic bacterium) protein is PTS system glucose-specific EIIA component (crr).